Reading from the N-terminus, the 593-residue chain is MLRPWLRQSTRAARSLPCCQCPRPYSSRLPTLTSPSSSVRRLQTSASESQDRVPLRKQLKQNAKALKAEKRQRRESEEASRQKWELTVGIEIHAQLNTETKLFSRASTSSTDLPNSNVALFDLAFPGSQPEFQVPTLLPALRAALALNCDIQPVSRFDRKHYFYQDQPAGYQITQYYEPFARNGYVDLFGYDGIAPEDGDHVRIGIKQVQLEQDTAKSQEYHPSTQLLDFNRVSHPLVEIITMPQIHTPATAAACVRKIQAILQSCSAVTTGMELGGLRADVNVSIRQRGDTEGVHQYGGIGGLGQRTEIKNLSSFKAVEDAIIAEKNRQIAVLESGGVVEGETRGWTIGSTETRRLRGKEGEVDYRYMPDPDLPPLLIGADLVSELANTLPTSSDELIGLLTGKEYGLSIEDAKPLVELEDGARLEYYQDVVDILRDLQQDQDPKSRGGLARVAGNWVLHELGGLLTKADLPWDAERVSALSLAQIIDHVQRKQITGPTAKQVLAMVFDGDTRAIPQLLEEENLLLRPLSREEYVALAEAAISQNPQMVEQIRTKNQLGKLGWFVGQMMRMGEKGRVEAPKADAILRELILG.

The transit peptide at M1 to S49 directs the protein to the mitochondrion. Residues S27 to L42 show a composition bias toward low complexity. Residues S27–S80 form a disordered region. The segment covering L66–S80 has biased composition (basic and acidic residues).

Belongs to the GatB/GatE family. GatB subfamily. As to quaternary structure, subunit of the heterotrimeric GatCAB amidotransferase (AdT) complex, composed of A, B and C subunits.

Its subcellular location is the mitochondrion. It carries out the reaction L-glutamyl-tRNA(Gln) + L-glutamine + ATP + H2O = L-glutaminyl-tRNA(Gln) + L-glutamate + ADP + phosphate + H(+). Allows the formation of correctly charged Gln-tRNA(Gln) through the transamidation of misacylated Glu-tRNA(Gln) in the mitochondria. The reaction takes place in the presence of glutamine and ATP through an activated gamma-phospho-Glu-tRNA(Gln). This is Glutamyl-tRNA(Gln) amidotransferase subunit B, mitochondrial from Aspergillus oryzae (strain ATCC 42149 / RIB 40) (Yellow koji mold).